Reading from the N-terminus, the 685-residue chain is Mannan-binding lectin serine protease 2 (685 aa).

Positions 1–19 (MRLLIVLGLLWSLVATLLG) are cleaved as a signal peptide. In terms of domain architecture, CUB 1 spans 20–137 (SKWPEPVFGR…TGFEAFYAAE (118 aa)). The Ca(2+) site is built by glutamate 67 and aspartate 75. A disulfide bridge connects residues cysteine 72 and cysteine 90. A glycan (N-linked (GlcNAc...) asparagine) is linked at asparagine 103. Positions 120, 122, 123, 138, and 139 each coordinate Ca(2+). One can recognise an EGF-like; calcium-binding domain in the interval 138 to 181 (DVDECRTSLGDSVPCDHYCHNYLGGYYCSCRVGYILHQNKHTCS). 4 disulfide bridges follow: cysteine 152–cysteine 165, cysteine 167–cysteine 180, cysteine 184–cysteine 211, and cysteine 241–cysteine 259. Position 158 is a (3R)-3-hydroxyasparagine (asparagine 158). Positions 159 and 162 each coordinate Ca(2+). The CUB 2 domain maps to 184-296 (CSGQVFTGRS…TGWKIHYTST (113 aa)). Asparagine 285 is a glycosylation site (N-linked (GlcNAc...) asparagine). 2 Sushi domains span residues 298 to 363 (QPCP…ECSI) and 364 to 431 (IDCG…VCKP). Disulfide bonds link cysteine 300–cysteine 348, cysteine 328–cysteine 361, cysteine 366–cysteine 411, cysteine 396–cysteine 429, cysteine 433–cysteine 551, cysteine 597–cysteine 617, and cysteine 628–cysteine 659. Residues 444 to 683 (IIGGQPAKPG…YIPWIENIIN (240 aa)) form the Peptidase S1 domain. Residues histidine 482 and aspartate 531 each act as charge relay system in the active site. Residue serine 632 is the Charge relay system of the active site. Asparagine 641 carries N-linked (GlcNAc...) asparagine glycosylation.

Belongs to the peptidase S1 family. As to quaternary structure, homodimer; disulfide-linked. Binds MBL2. Isoform 2 binds to MASP1. Binds SERPING1. In terms of processing, N-glycosylated. Post-translationally, the iron and 2-oxoglutarate dependent 3-hydroxylation of aspartate and asparagine is (R) stereospecific within EGF domains. Highly expressed in liver. Secreted in plasma.

The protein localises to the secreted. It catalyses the reaction Selective cleavage after Arg-223 in complement component C2 (-Ser-Leu-Gly-Arg-|-Lys-Ile-Gln-Ile) and after Arg-76 in complement component C4 (-Gly-Leu-Gln-Arg-|-Ala-Leu-Glu-Ile).. Functionally, serum protease that plays an important role in the activation of the complement system via mannose-binding lectin. After activation by auto-catalytic cleavage it cleaves C2 and C4, leading to their activation and to the formation of C3 convertase. The chain is Mannan-binding lectin serine protease 2 (Masp2) from Rattus norvegicus (Rat).